Reading from the N-terminus, the 491-residue chain is Cobyric acid synthase (491 aa).

Residues 250–437 enclose the GATase cobBQ-type domain; the sequence is QLRVVVPVLP…VHGVFDHPQA (188 aa). Cys-331 serves as the catalytic Nucleophile. Residue His-429 is part of the active site.

It belongs to the CobB/CobQ family. CobQ subfamily.

Its pathway is cofactor biosynthesis; adenosylcobalamin biosynthesis. Catalyzes amidations at positions B, D, E, and G on adenosylcobyrinic A,C-diamide. NH(2) groups are provided by glutamine, and one molecule of ATP is hydrogenolyzed for each amidation. The polypeptide is Cobyric acid synthase (Xanthomonas axonopodis pv. citri (strain 306)).